The following is a 604-amino-acid chain: Threonine--tRNA ligase (604 aa).

Positions 209–500 are catalytic; that stretch reads DHRKLGQEMG…LTEHFGGEFP (292 aa). Residues C301, H352, and H477 each contribute to the Zn(2+) site.

This sequence belongs to the class-II aminoacyl-tRNA synthetase family. Homodimer. Zn(2+) serves as cofactor.

The protein resides in the cytoplasm. It catalyses the reaction tRNA(Thr) + L-threonine + ATP = L-threonyl-tRNA(Thr) + AMP + diphosphate + H(+). Catalyzes the attachment of threonine to tRNA(Thr) in a two-step reaction: L-threonine is first activated by ATP to form Thr-AMP and then transferred to the acceptor end of tRNA(Thr). Also edits incorrectly charged L-seryl-tRNA(Thr). This is Threonine--tRNA ligase from Helicobacter hepaticus (strain ATCC 51449 / 3B1).